Here is a 172-residue protein sequence, read N- to C-terminus: Ribosome maturation factor RimM (172 aa).

Residues 95–168 (QEGEFYYHQI…CVDVELMEGL (74 aa)) form the PRC barrel domain.

It belongs to the RimM family. As to quaternary structure, binds ribosomal protein uS19.

The protein resides in the cytoplasm. Functionally, an accessory protein needed during the final step in the assembly of 30S ribosomal subunit, possibly for assembly of the head region. Essential for efficient processing of 16S rRNA. May be needed both before and after RbfA during the maturation of 16S rRNA. It has affinity for free ribosomal 30S subunits but not for 70S ribosomes. This chain is Ribosome maturation factor RimM, found in Streptococcus pyogenes serotype M49 (strain NZ131).